Reading from the N-terminus, the 530-residue chain is uncharacterized protein (530 aa).

Composition is skewed to polar residues over residues 60 to 74 (LNES…SSTP) and 92 to 103 (GQGTSRPLPTLS). Disordered regions lie at residues 60 to 103 (LNES…PTLS) and 121 to 155 (ASST…GLGN). The span at 131–142 (PDPRDAPREGSF) shows a compositional bias: basic and acidic residues.

This is an uncharacterized protein from Mus musculus (Mouse).